We begin with the raw amino-acid sequence, 176 residues long: Centromere protein R (176 aa).

Lys-8 participates in a covalent cross-link: Glycyl lysine isopeptide (Lys-Gly) (interchain with G-Cter in SUMO2). Ser-17 is modified (phosphoserine). The tract at residues 20–50 (PSKIVRKKSITAYSPTTGTYQLSPFSSPATP) is DD1. Lys-22 participates in a covalent cross-link: Glycyl lysine isopeptide (Lys-Gly) (interchain with G-Cter in SUMO2). Ser-28 is modified (phosphoserine). Residues 34–48 (PTTGTYQLSPFSSPA) show a composition bias toward polar residues. The tract at residues 34 to 78 (PTTGTYQLSPFSSPATPKEQEHRNGPSNETRKRSNLSSPVRQEST) is disordered. The segment covering 51–65 (KEQEHRNGPSNETRK) has biased composition (basic and acidic residues). A Nuclear localization signal motif is present at residues 63–66 (TRKR). A Phosphoserine modification is found at Ser-71. Residues 82–112 (RDGFMVLLSKIEISSEKTMEIMKNLSSIQAL) adopt a coiled-coil conformation. Positions 171 to 175 (LKAIL) match the LXXIL motif motif.

In terms of assembly, homodimer; mediated by the coiled coil domain. Interacts with CCNA2 and MTA1. Interacts with NFKB1 NF-kappa-B subunit. Component of the CENPA-CAD complex, composed of CENPI, CENPK, CENPL, CENPO, CENPP, CENPQ, CENPR and CENPS. The CENPA-CAD complex interacts with the CENPA-NAC complex, at least composed of CENPA, CENPC, CENPH, CENPM, CENPN, CENPT and CENPU. Interacts with TASOR. Expressed in the spermatogonia and spermatocytes.

The protein resides in the nucleus. It localises to the chromosome. The protein localises to the centromere. Its subcellular location is the kinetochore. Transcription coregulator that can have both coactivator and corepressor functions. Involved in the coactivation of nuclear receptors for retinoid X (RXRs) and thyroid hormone (TRs) in a ligand-dependent fashion. In contrast, it does not coactivate nuclear receptors for retinoic acid, vitamin D, progesterone receptor, nor glucocorticoid. Acts as a coactivator for estrogen receptor alpha. Acts as a transcriptional corepressor via its interaction with the NFKB1 NF-kappa-B subunit, possibly by interfering with the transactivation domain of NFKB1. Induces apoptosis in breast cancer cells, but not in other cancer cells, via a caspase-2 mediated pathway that involves mitochondrial membrane permeabilization but does not require other caspases. May also act as an inhibitor of cyclin A-associated kinase. Also acts a component of the CENPA-CAD (nucleosome distal) complex, a complex recruited to centromeres which is involved in assembly of kinetochore proteins, mitotic progression and chromosome segregation. May be involved in incorporation of newly synthesized CENPA into centromeres via its interaction with the CENPA-NAC complex. The protein is Centromere protein R (Itgb3bp) of Mus musculus (Mouse).